The following is a 503-amino-acid chain: Maturase K (503 aa).

Belongs to the intron maturase 2 family. MatK subfamily.

The protein resides in the plastid. It localises to the chloroplast. Its function is as follows. Usually encoded in the trnK tRNA gene intron. Probably assists in splicing its own and other chloroplast group II introns. The sequence is that of Maturase K from Vicia sativa (Spring vetch).